The primary structure comprises 423 residues: UDP-N-acetylmuramoylalanine--D-glutamate ligase (423 aa).

Position 112–118 (112–118 (GSVGKST)) interacts with ATP.

This sequence belongs to the MurCDEF family.

Its subcellular location is the cytoplasm. The catalysed reaction is UDP-N-acetyl-alpha-D-muramoyl-L-alanine + D-glutamate + ATP = UDP-N-acetyl-alpha-D-muramoyl-L-alanyl-D-glutamate + ADP + phosphate + H(+). It functions in the pathway cell wall biogenesis; peptidoglycan biosynthesis. Cell wall formation. Catalyzes the addition of glutamate to the nucleotide precursor UDP-N-acetylmuramoyl-L-alanine (UMA). This is UDP-N-acetylmuramoylalanine--D-glutamate ligase from Thermosipho africanus (strain TCF52B).